Consider the following 71-residue polypeptide: Protein SlyX homolog (71 aa).

It belongs to the SlyX family.

The sequence is that of Protein SlyX homolog from Rhodopseudomonas palustris (strain HaA2).